Here is a 143-residue protein sequence, read N- to C-terminus: Polyadenylate-binding protein-interacting protein 2 (143 aa).

Positions 11–21 match the PAM2-like motif; sequence TLNPNAPVFDP.

The protein is Polyadenylate-binding protein-interacting protein 2 (CID2) of Arabidopsis thaliana (Mouse-ear cress).